Here is a 62-residue protein sequence, read N- to C-terminus: Large ribosomal subunit protein uL29 (62 aa).

It belongs to the universal ribosomal protein uL29 family.

The polypeptide is Large ribosomal subunit protein uL29 (Laribacter hongkongensis (strain HLHK9)).